Consider the following 987-residue polypeptide: Eukaryotic translation initiation factor 3 subunit A (987 aa).

Residues 93-122 (LHLATDKAEQARSQADALEEALDVDDLEAD) are a coiled coil. Positions 316 to 513 (LQLIASSVVL…GVVIFGNLGI (198 aa)) constitute a PCI domain. Coiled-coil stretches lie at residues 556-742 (TVEK…EKNR) and 797-858 (LKIE…REEL). Residues 808–859 (QEEEEARKQEEAERLKKVEAERKANLDKAFEKQRQREIELEEKSRREREELL) are compositionally biased toward basic and acidic residues. The segment at 808-987 (QEEEEARKQE…GSSRPRPTQR (180 aa)) is disordered. Residues 872–894 (PTVTPVGTTAPAAAAAAAGAPAA) are compositionally biased toward low complexity. Polar residues-rich tracts occupy residues 905–916 (TEVSGPSAPTSS) and 976–987 (TFGSSRPRPTQR).

This sequence belongs to the eIF-3 subunit A family. In terms of assembly, component of the eukaryotic translation initiation factor 3 (eIF-3) complex. Binds to the translation initiation factor TIF3H1.

Its subcellular location is the cytoplasm. In terms of biological role, RNA-binding component of the eukaryotic translation initiation factor 3 (eIF-3) complex, which is involved in protein synthesis of a specialized repertoire of mRNAs and, together with other initiation factors, stimulates binding of mRNA and methionyl-tRNAi to the 40S ribosome. The eIF-3 complex specifically targets and initiates translation of a subset of mRNAs involved in cell proliferation. The chain is Eukaryotic translation initiation factor 3 subunit A (TIF3A1) from Arabidopsis thaliana (Mouse-ear cress).